Reading from the N-terminus, the 296-residue chain is Glycine and tyrosine-rich protein (296 aa).

Positions 1 to 18 (MKVLVTALIISFSTAVLT) are cleaved as a signal peptide. The interval 157 to 280 (MESRLRPQAT…NQPEETPAPN (124 aa)) is disordered. The span at 172-264 (TGGQPSTGGK…STGGQPSTGG (93 aa)) shows a compositional bias: low complexity.

Component of the acid-insoluble and acid-soluble organic matrix of calcified layers of the shell (at protein level).

The protein resides in the secreted. The protein is Glycine and tyrosine-rich protein of Lottia gigantea (Giant owl limpet).